The sequence spans 469 residues: MAITRFAPSPTGYLHIGGLRTSLYSYLWARKTGGEFRLRIEDTDLARNSEEAMKAIIDAFDWVGLNYDGEVFYQSKRTDIYKQYIDKLLESGNAYKCYMSKEELDALRAAQEAAKQTPRYDGTWRPEPGKELPPVPAGVEPVIRIKAPTTGTIEFDDGVKGHMKFDANQVDDYVIARSNGMPTYNFVVAIDDALMGMTDVIRGDDHLSNTPKQIVVYNALGFKVPKFYHVPMINNPEGKKLSKRDGAMDVMDYKRLGYLPEALLNFLVRLGWSNGDQEIFSMKEMLELFDPSNINKSASSYNGEKLLWLNSEYIKAVSNERLIEELKFFDLDLSNYPKKNEILDLAKQRAQTLVELKKSITDIIDIPTSYEESGVKKFIKEDTKELLEKYLLLLESNKNSLDSVEKIEEFTKPFINDNGLKFPQLFQPIRIALTGGTQAPSVYDIIFILGYDEIFKRINEALKRNFQNT.

A 'HIGH' region motif is present at residues 8–18 (PSPTGYLHIGG). The interval 117–137 (TPRYDGTWRPEPGKELPPVPA) is disordered. A 'KMSKS' region motif is present at residues 240-244 (KLSKR). K243 is an ATP binding site.

Belongs to the class-I aminoacyl-tRNA synthetase family. Glutamate--tRNA ligase type 1 subfamily. In terms of assembly, monomer.

It is found in the cytoplasm. The enzyme catalyses tRNA(Glu) + L-glutamate + ATP = L-glutamyl-tRNA(Glu) + AMP + diphosphate. Its function is as follows. Catalyzes the attachment of glutamate to tRNA(Glu) in a two-step reaction: glutamate is first activated by ATP to form Glu-AMP and then transferred to the acceptor end of tRNA(Glu). The sequence is that of Glutamate--tRNA ligase 1 from Aliarcobacter butzleri (strain RM4018) (Arcobacter butzleri).